We begin with the raw amino-acid sequence, 135 residues long: MKRLLSWLTGALVMASLMAGLVMPSSVYADDDLRNKYSGNEIRNIADDKIAARDGKVDLNNSSVRRFQQFPGMYPTMAGKIVLGGPYDSVDDVLSLDLTERQQELFAKYRDNFTVTPPSIALNEGDDRINDGQYR.

Residues 1–29 form the signal peptide; it reads MKRLLSWLTGALVMASLMAGLVMPSSVYA.

The protein belongs to the PsbU family. PSII is composed of 1 copy each of membrane proteins PsbA, PsbB, PsbC, PsbD, PsbE, PsbF, PsbH, PsbI, PsbJ, PsbK, PsbL, PsbM, PsbT, PsbX, PsbY, PsbZ, Psb30/Ycf12, peripheral proteins PsbO, CyanoQ (PsbQ), PsbU, PsbV and a large number of cofactors. It forms dimeric complexes.

The protein localises to the cellular thylakoid membrane. In terms of biological role, one of the extrinsic, lumenal subunits of photosystem II (PSII). PSII is a light-driven water plastoquinone oxidoreductase, using light energy to abstract electrons from H(2)O, generating a proton gradient subsequently used for ATP formation. The extrinsic proteins stabilize the structure of photosystem II oxygen-evolving complex (OEC), the ion environment of oxygen evolution and protect the OEC against heat-induced inactivation. The polypeptide is Photosystem II extrinsic protein U (Synechococcus sp. (strain CC9605)).